The primary structure comprises 199 residues: GTP-binding protein Di-Ras2 (199 aa).

Residues Gly-14–Ser-21, Arg-33–Thr-39, Asp-61–Ser-65, and Asn-121–Asp-124 each bind GTP. Ser-35 is modified (phosphoserine). The short motif at Tyr-36–Tyr-44 is the Effector region element. Residue Ser-126 is modified to Phosphoserine. Ala-152–Lys-153 is a GTP binding site. Residue Cys-196 is modified to Cysteine methyl ester. The S-geranylgeranyl cysteine moiety is linked to residue Cys-196. A propeptide spans Val-197–Met-199 (removed in mature form).

Belongs to the small GTPase superfamily. Di-Ras family. Post-translationally, ubiquitinated by the ECS(ASB11) complex via 'Lys-11'-linked ubiquitin chains, leading to its degradation by the proteasome.

It is found in the cell membrane. The catalysed reaction is GTP + H2O = GDP + phosphate + H(+). Displays low GTPase activity and exists predominantly in the GTP-bound form. In Pongo abelii (Sumatran orangutan), this protein is GTP-binding protein Di-Ras2 (DIRAS2).